Here is a 546-residue protein sequence, read N- to C-terminus: CTP synthase (546 aa).

An amidoligase domain region spans residues M1–L266. S14 lines the CTP pocket. Residue S14 participates in UTP binding. ATP is bound by residues S15 to I20 and D72. Residues D72 and E140 each contribute to the Mg(2+) site. CTP contacts are provided by residues D147–E149, K187–Q192, and K223. UTP-binding positions include K187 to Q192 and K223. Residue K239–V241 participates in ATP binding. A Glutamine amidotransferase type-1 domain is found at V291–R542. G352 lines the L-glutamine pocket. The active-site Nucleophile; for glutamine hydrolysis is C379. Residues L380–Q383, E403, and R470 each bind L-glutamine. Residues H515 and E517 contribute to the active site.

Belongs to the CTP synthase family. In terms of assembly, homotetramer.

It carries out the reaction UTP + L-glutamine + ATP + H2O = CTP + L-glutamate + ADP + phosphate + 2 H(+). The enzyme catalyses L-glutamine + H2O = L-glutamate + NH4(+). It catalyses the reaction UTP + NH4(+) + ATP = CTP + ADP + phosphate + 2 H(+). It participates in pyrimidine metabolism; CTP biosynthesis via de novo pathway; CTP from UDP: step 2/2. With respect to regulation, allosterically activated by GTP, when glutamine is the substrate; GTP has no effect on the reaction when ammonia is the substrate. The allosteric effector GTP functions by stabilizing the protein conformation that binds the tetrahedral intermediate(s) formed during glutamine hydrolysis. Inhibited by the product CTP, via allosteric rather than competitive inhibition. Catalyzes the ATP-dependent amination of UTP to CTP with either L-glutamine or ammonia as the source of nitrogen. Regulates intracellular CTP levels through interactions with the four ribonucleotide triphosphates. The sequence is that of CTP synthase from Shewanella oneidensis (strain ATCC 700550 / JCM 31522 / CIP 106686 / LMG 19005 / NCIMB 14063 / MR-1).